A 222-amino-acid chain; its full sequence is Large ribosomal subunit protein mL64 (222 aa).

Disordered stretches follow at residues 14–40 and 188–222; these read LTATLAPGSRGYRAPPPPRREPGPWWP and KRLKEEKQRQKQEARAAALAAAAAQDPAASGAPSS. The stretch at 144–213 forms a coiled coil; the sequence is EKAQADKERR…AALAAAAAQD (70 aa). Positions 184–200 match the Nuclear localization signal motif; sequence KKERKRLKEEKQRQKQE. A compositionally biased stretch (basic and acidic residues) spans 188 to 201; sequence KRLKEEKQRQKQEA. Residues 202 to 216 show a composition bias toward low complexity; it reads RAAALAAAAAQDPAA.

The protein belongs to the mitochondrion-specific ribosomal protein mL64 family. In terms of assembly, component of the mitochondrial ribosome large subunit (39S) which comprises a 16S rRNA and about 50 distinct proteins. Interacts with GADD45A, GADD45B and GADD45G. Interacts with NR4A1 via the NR4A1 AB domain. Interacts with ATAD3A and ATAD3B.

Its subcellular location is the mitochondrion. It localises to the nucleus. Acts as a negative regulator of G1 to S cell cycle phase progression by inhibiting cyclin-dependent kinases. Inhibitory effects are additive with GADD45 proteins but also occur in the absence of GADD45 proteins. Acts as a repressor of the orphan nuclear receptor NR4A1 by inhibiting AB domain-mediated transcriptional activity. May be involved in the hormone-mediated regulation of NR4A1 transcriptional activity. May play a role in mitochondrial protein synthesis. The protein is Large ribosomal subunit protein mL64 (GADD45GIP1) of Chlorocebus aethiops (Green monkey).